Consider the following 773-residue polypeptide: Linolenate 9R-lipoxygenase (773 aa).

One can recognise a Lipoxygenase domain in the interval 176–773; sequence YEWVDSKKKS…LEDLMMSINI (598 aa). Residues H515, H520, and I773 each contribute to the Fe cation site.

This sequence belongs to the lipoxygenase family.

It catalyses the reaction (9Z,12Z,15Z)-octadecatrienoate + O2 = (9R,10E,12Z,15Z)-9-hydroperoxyoctadeca-10,12,15-trienoate. Its pathway is lipid metabolism; oxylipin biosynthesis. Catalyzes the conversion of alpha-linoleate to (9R,10E,12Z,15Z)-9-hydroperoxyoctadeca-10,12,15-trienoate in oxylipin biosynthesis. Also converts alpha-linoleate to (9R,10E,12Z)-9-hydroperoxyoctadeca-10,12-dienoate. This Nostoc sp. (strain PCC 7120 / SAG 25.82 / UTEX 2576) protein is Linolenate 9R-lipoxygenase.